Reading from the N-terminus, the 395-residue chain is Leucine aminopeptidase 1 (395 aa).

Residues 1–19 form the signal peptide; that stretch reads MKHLSLLALAAVAPTTALA. A propeptide spanning residues 20-95 is cleaved from the precursor; that stretch reads GVIDHQQVTF…SVKSFEQTKV (76 aa). N187 carries N-linked (GlcNAc...) asparagine glycosylation. 4 residues coordinate Zn(2+): H195, D214, E253, and D280. Cysteines 329 and 333 form a disulfide. H362 contributes to the Zn(2+) binding site.

Belongs to the peptidase M28 family. M28E subfamily. In terms of assembly, monomer. Zn(2+) is required as a cofactor.

The protein resides in the secreted. Extracellular aminopeptidase that allows assimilation of proteinaceous substrates. The protein is Leucine aminopeptidase 1 (LAP1) of Uncinocarpus reesii (strain UAMH 1704).